A 453-amino-acid polypeptide reads, in one-letter code: Wall-associated protein (453 aa).

An N-terminal signal peptide occupies residues 1-29 (MKMKRKLLSLVSVLTILLGAFWVTKIVKA). Residues 331 to 403 (GRASSRVKRQ…TASQTNVPTT (73 aa)) are disordered. Residues 342 to 403 (ETTTVTETTT…TASQTNVPTT (62 aa)) show a composition bias toward low complexity. The LPXTG sorting signal motif lies at 422–426 (LPSTG). T425 carries the pentaglycyl murein peptidoglycan amidated threonine modification. Positions 426 to 453 (GEQAGLLLTTVGLVIVAVAGVYFYRTRR) are cleaved as a propeptide — removed by sortase.

The protein localises to the secreted. Its subcellular location is the cell wall. The polypeptide is Wall-associated protein (wapA) (Streptococcus mutans serotype c (strain ATCC 700610 / UA159)).